We begin with the raw amino-acid sequence, 408 residues long: NADH-quinone oxidoreductase subunit D (408 aa).

This sequence belongs to the complex I 49 kDa subunit family. NDH-1 is composed of 14 different subunits. Subunits NuoB, C, D, E, F, and G constitute the peripheral sector of the complex.

Its subcellular location is the cell inner membrane. The catalysed reaction is a quinone + NADH + 5 H(+)(in) = a quinol + NAD(+) + 4 H(+)(out). NDH-1 shuttles electrons from NADH, via FMN and iron-sulfur (Fe-S) centers, to quinones in the respiratory chain. The immediate electron acceptor for the enzyme in this species is believed to be ubiquinone. Couples the redox reaction to proton translocation (for every two electrons transferred, four hydrogen ions are translocated across the cytoplasmic membrane), and thus conserves the redox energy in a proton gradient. In Campylobacter jejuni subsp. doylei (strain ATCC BAA-1458 / RM4099 / 269.97), this protein is NADH-quinone oxidoreductase subunit D.